The following is a 424-amino-acid chain: Microcin H47 secretion protein MchE (424 aa).

Residues 1–25 (MFRQDALENRKMKWQGRAILLPGIP) are Cytoplasmic-facing. A helical membrane pass occupies residues 26–46 (LWLIMLGSIVFITAFLMFIIV). The Periplasmic portion of the chain corresponds to 47–424 (GTYSRRVNVS…KHSATGPLND (378 aa)).

This sequence belongs to the membrane fusion protein (MFP) (TC 8.A.1) family.

It localises to the cell inner membrane. Probably involved, in conjunction with MchF, in the secretion of microcin H47. This is Microcin H47 secretion protein MchE (mchE) from Escherichia coli.